Consider the following 108-residue polypeptide: UPF0060 membrane protein Mvan_3406 (108 aa).

The next 4 helical transmembrane spans lie at 7–27 (LLFV…WQGV), 32–52 (GLTW…VAAF), 61–81 (VLAA…VVAD), and 87–107 (RWDI…MYAP).

It belongs to the UPF0060 family.

It is found in the cell membrane. In Mycolicibacterium vanbaalenii (strain DSM 7251 / JCM 13017 / BCRC 16820 / KCTC 9966 / NRRL B-24157 / PYR-1) (Mycobacterium vanbaalenii), this protein is UPF0060 membrane protein Mvan_3406.